The following is a 192-amino-acid chain: Inosine triphosphate pyrophosphatase (192 aa).

8-13 (TTNLKK) contacts ITP. Glu34 contacts Mg(2+). ITP contacts are provided by residues Lys46, 64–65 (DT), Lys81, 141–144 (EGFD), Lys164, and 169–170 (HR).

Belongs to the HAM1 NTPase family. In terms of assembly, homodimer. The cofactor is Mg(2+). Mn(2+) is required as a cofactor.

Its subcellular location is the cytoplasm. The protein localises to the nucleus. The enzyme catalyses ITP + H2O = IMP + diphosphate + H(+). It catalyses the reaction dITP + H2O = dIMP + diphosphate + H(+). The catalysed reaction is XTP + H2O = XMP + diphosphate + H(+). In terms of biological role, pyrophosphatase that hydrolyzes non-canonical purine nucleotides such as inosine triphosphate (ITP), deoxyinosine triphosphate (dITP) or xanthosine 5'-triphosphate (XTP) to their respective monophosphate derivatives. The enzyme does not distinguish between the deoxy- and ribose forms. Probably excludes non-canonical purines from RNA and DNA precursor pools, thus preventing their incorporation into RNA and DNA and avoiding chromosomal lesions. The sequence is that of Inosine triphosphate pyrophosphatase from Encephalitozoon cuniculi (strain GB-M1) (Microsporidian parasite).